Consider the following 80-residue polypeptide: WAP four-disulfide core domain protein 15A (80 aa).

An N-terminal signal peptide occupies residues 1–20 (MKPSSLLLFTTTILLCLSMA). The WAP domain maps to 29–76 (VTPKQGYCPEFLLDCPFVLLPVCSRDKGCKGTKKCCFYYCQMRCVEPW). 4 cysteine pairs are disulfide-bonded: C36–C64, C43–C68, C51–C63, and C57–C72.

Its subcellular location is the secreted. Its function is as follows. Antibacterial protein. The protein is WAP four-disulfide core domain protein 15A of Mus musculus (Mouse).